A 321-amino-acid chain; its full sequence is Transmembrane and ubiquitin-like domain-containing protein 2 (321 aa).

Residues 36–56 (VMVVAGVVVLILALVLAWLST) traverse the membrane as a helical segment. Disordered stretches follow at residues 87–131 (LVAG…GGVE) and 145–170 (KRQA…LPPS). The segment covering 104-120 (EGNDEKAEEAGEGRGDS) has biased composition (basic and acidic residues). Residues 174-247 (ITVRLKFLND…IHCHRSPPGS (74 aa)) form the Ubiquitin-like domain. A run of 2 helical transmembrane segments spans residues 266 to 286 (LGVN…GVVW) and 295 to 315 (FFTA…SFLV).

It is found in the membrane. This chain is Transmembrane and ubiquitin-like domain-containing protein 2 (TMUB2), found in Homo sapiens (Human).